We begin with the raw amino-acid sequence, 282 residues long: Bifunctional protein FolD (282 aa).

NADP(+) contacts are provided by residues 165-167 and Ser-190; that span reads GRS.

This sequence belongs to the tetrahydrofolate dehydrogenase/cyclohydrolase family. In terms of assembly, homodimer.

It catalyses the reaction (6R)-5,10-methylene-5,6,7,8-tetrahydrofolate + NADP(+) = (6R)-5,10-methenyltetrahydrofolate + NADPH. The enzyme catalyses (6R)-5,10-methenyltetrahydrofolate + H2O = (6R)-10-formyltetrahydrofolate + H(+). It functions in the pathway one-carbon metabolism; tetrahydrofolate interconversion. Functionally, catalyzes the oxidation of 5,10-methylenetetrahydrofolate to 5,10-methenyltetrahydrofolate and then the hydrolysis of 5,10-methenyltetrahydrofolate to 10-formyltetrahydrofolate. This chain is Bifunctional protein FolD, found in Macrococcus caseolyticus (strain JCSC5402) (Macrococcoides caseolyticum).